The primary structure comprises 348 residues: Probable protein phosphatase 2C 35 (348 aa).

Residues 11-24 (RYPSSSSDGDSRGP) are compositionally biased toward low complexity. The segment at 11-40 (RYPSSSSDGDSRGPLEANGVLKGKDQKPLG) is disordered. In terms of domain architecture, PPM-type phosphatase spans 52-342 (VYSVLSQRGY…DDITIIIVQI (291 aa)). Positions 93, 94, 289, and 333 each coordinate Mn(2+).

This sequence belongs to the PP2C family. It depends on Mg(2+) as a cofactor. Mn(2+) serves as cofactor.

It carries out the reaction O-phospho-L-seryl-[protein] + H2O = L-seryl-[protein] + phosphate. The catalysed reaction is O-phospho-L-threonyl-[protein] + H2O = L-threonyl-[protein] + phosphate. This is Probable protein phosphatase 2C 35 from Arabidopsis thaliana (Mouse-ear cress).